A 306-amino-acid polypeptide reads, in one-letter code: UDP-3-O-acyl-N-acetylglucosamine deacetylase (306 aa).

Zn(2+) contacts are provided by His79, His238, and Asp242. The Proton donor role is filled by His265.

Belongs to the LpxC family. It depends on Zn(2+) as a cofactor.

The catalysed reaction is a UDP-3-O-[(3R)-3-hydroxyacyl]-N-acetyl-alpha-D-glucosamine + H2O = a UDP-3-O-[(3R)-3-hydroxyacyl]-alpha-D-glucosamine + acetate. It participates in glycolipid biosynthesis; lipid IV(A) biosynthesis; lipid IV(A) from (3R)-3-hydroxytetradecanoyl-[acyl-carrier-protein] and UDP-N-acetyl-alpha-D-glucosamine: step 2/6. Functionally, catalyzes the hydrolysis of UDP-3-O-myristoyl-N-acetylglucosamine to form UDP-3-O-myristoylglucosamine and acetate, the committed step in lipid A biosynthesis. The polypeptide is UDP-3-O-acyl-N-acetylglucosamine deacetylase (Shewanella loihica (strain ATCC BAA-1088 / PV-4)).